Reading from the N-terminus, the 434-residue chain is Methylenetetrahydrofolate--tRNA-(uracil-5-)-methyltransferase TrmFO (434 aa).

10-15 (GAGLAG) provides a ligand contact to FAD.

The protein belongs to the MnmG family. TrmFO subfamily. The cofactor is FAD.

It is found in the cytoplasm. It catalyses the reaction uridine(54) in tRNA + (6R)-5,10-methylene-5,6,7,8-tetrahydrofolate + NADH + H(+) = 5-methyluridine(54) in tRNA + (6S)-5,6,7,8-tetrahydrofolate + NAD(+). It carries out the reaction uridine(54) in tRNA + (6R)-5,10-methylene-5,6,7,8-tetrahydrofolate + NADPH + H(+) = 5-methyluridine(54) in tRNA + (6S)-5,6,7,8-tetrahydrofolate + NADP(+). Functionally, catalyzes the folate-dependent formation of 5-methyl-uridine at position 54 (M-5-U54) in all tRNAs. The polypeptide is Methylenetetrahydrofolate--tRNA-(uracil-5-)-methyltransferase TrmFO (Bacillus cereus (strain ATCC 10987 / NRS 248)).